We begin with the raw amino-acid sequence, 877 residues long: Alanine--tRNA ligase (877 aa).

Zn(2+) is bound by residues His567, His571, Cys669, and His673.

The protein belongs to the class-II aminoacyl-tRNA synthetase family. The cofactor is Zn(2+).

It is found in the cytoplasm. The enzyme catalyses tRNA(Ala) + L-alanine + ATP = L-alanyl-tRNA(Ala) + AMP + diphosphate. In terms of biological role, catalyzes the attachment of alanine to tRNA(Ala) in a two-step reaction: alanine is first activated by ATP to form Ala-AMP and then transferred to the acceptor end of tRNA(Ala). Also edits incorrectly charged Ser-tRNA(Ala) and Gly-tRNA(Ala) via its editing domain. This Rickettsia typhi (strain ATCC VR-144 / Wilmington) protein is Alanine--tRNA ligase.